The chain runs to 100 residues: Small ribosomal subunit protein bS21 (100 aa).

The segment covering 37-52 (EKPSEKKAREKAEAVR) has biased composition (basic and acidic residues). The interval 37 to 100 (EKPSEKKARE…GAGAGPRGPR (64 aa)) is disordered. The span at 53–62 (RARKLARKKL) shows a compositional bias: basic residues. The span at 84-100 (GAAGAGAGAGAGPRGPR) shows a compositional bias: gly residues.

The protein belongs to the bacterial ribosomal protein bS21 family.

The polypeptide is Small ribosomal subunit protein bS21 (Rhodopseudomonas palustris (strain BisB5)).